Here is a 212-residue protein sequence, read N- to C-terminus: U8 snoRNA-decapping enzyme (212 aa).

The interval 1–23 is disordered; that stretch reads MAESRSPDRGAKEDKPRPRNISR. 3 residues coordinate substrate: His-37, Arg-63, and Phe-70. A Nudix hydrolase domain is found at 39–187; it reads LLHAPSQAKL…IGNSKSQLLY (149 aa). The Mn(2+) site is built by Gly-72, Glu-89, Glu-93, and Glu-150. A Nudix box motif is present at residues 74–95; the sequence is FVDTRDISLEEGLKRELEEELG. Substrate-binding residues include Asn-180 and Gln-184.

This sequence belongs to the Nudix hydrolase family. NUDT16 subfamily. Homodimer. It depends on Mg(2+) as a cofactor. The cofactor is Mn(2+). Requires Co(2+) as cofactor. In terms of tissue distribution, detected in ovary, and at very low levels in epithelial cells (at protein level).

Its subcellular location is the nucleus. The protein localises to the nucleolus. It is found in the nucleoplasm. It localises to the cytoplasm. It carries out the reaction a 5'-end (N(7)-methyl 5'-triphosphoguanosine)-ribonucleoside in mRNA + H2O = N(7)-methyl-GDP + a 5'-end phospho-ribonucleoside in mRNA + 2 H(+). The catalysed reaction is IDP + H2O = IMP + phosphate + H(+). The enzyme catalyses dIDP + H2O = dIMP + phosphate + H(+). It catalyses the reaction a 5'-end NAD(+)-phospho-ribonucleoside in mRNA + H2O = a 5'-end phospho-ribonucleoside in mRNA + NAD(+) + H(+). It carries out the reaction a 5'-end FAD-phospho-ribonucleoside in mRNA + H2O = a 5'-end phospho-adenosine-phospho-ribonucleoside in mRNA + FMN + 2 H(+). The catalysed reaction is a 5'-end CoA-ribonucleoside in mRNA + H2O = a 5'-end phospho-adenosine-phospho-ribonucleoside in mRNA + (R)-4'-phosphopantetheine + 2 H(+). Functionally, RNA-binding and decapping enzyme that catalyzes the cleavage of the cap structure of snoRNAs and mRNAs in a metal-dependent manner. Part of the U8 snoRNP complex that is required for the accumulation of mature 5.8S and 28S rRNA. Has diphosphatase activity and removes m7G and/or m227G caps from U8 snoRNA and leaves a 5'monophosphate on the RNA. Also catalyzes the cleavage of the cap structure on mRNAs. Does not hydrolyze cap analog structures like 7-methylguanosine nucleoside triphosphate (m7GpppG). Also hydrolysis m7G- and m227G U3-capped RNAs but with less efficiencies. Has broad substrate specificity with manganese or cobalt as cofactor and can act on various RNA species. Binds to the U8 snoRNA; metal is not required for RNA-binding. May play a role in the regulation of snoRNAs and mRNAs degradation. Also acts as a phosphatase; hydrolyzes the non-canonical purine nucleotides inosine diphosphate (IDP) and deoxyinosine diphosphate (dITP) as well as guanosine diphosphate (GDP), deoxyguanosine diphosphate (dGDP), xanthine diphosphate (XDP), inosine triphosphate (ITP) and deoxyinosine triphosphate (ITP) to their respective monophosphate derivatives and does not distinguish between the deoxy- and ribose forms. The order of activity with different substrates is IDP &gt; dIDP &gt;&gt; GDP = dGDP &gt; XDP = ITP = dITP. Binds strongly to GTP, ITP and XTP. Participates in the hydrolysis of dIDP/IDP and probably excludes non-canonical purines from RNA and DNA precursor pools, thus preventing their incorporation into RNA and DNA and avoiding chromosomal lesions. Exhibits decapping activity towards NAD-capped RNAs and FAD-capped RNAs. Exhibits decapping activity towards dpCoA-capped RNAs in vitro. The chain is U8 snoRNA-decapping enzyme (nudt16) from Xenopus laevis (African clawed frog).